Reading from the N-terminus, the 321-residue chain is MKNWLCQAVRGEPMIELNRIEELFDNQQFSLHELVLNELGVYVFVKNRRGEYLYANPLTLKLFETNAQSLLGKTDHDFFHDDQLSDILAADQQVFETRLSVVHEERAIAKSNGLVRIYRAVKHPILHRVTGEVIGLIGVSTDITDIVELREQLYQLANTDSLTQLCNRRKLWADFRAAFARAKRLRQPLSCISIDIDNFKLINDQFGHDKGDEVLCFLAKLFQSVISDHHFCGRVGGEEFIIVLENTHVETAFHLAEQIRQRFAEHPFFEQNEHIYLCAGVSSLHHGDHDIADIYRRSDQALYKAKRNGRNRCCIYRQSTE.

In terms of domain architecture, PAS spans 28–98 (QFSLHELVLN…AADQQVFETR (71 aa)). The PAC domain occupies 102 to 155 (VHEERAIAKSNGLVRIYRAVKHPILHRVTGEVIGLIGVSTDITDIVELREQLYQ). The region spanning 187 to 318 (QPLSCISIDI…GRNRCCIYRQ (132 aa)) is the GGDEF domain. Mg(2+) contacts are provided by D195, I196, and E238. Catalysis depends on E238, which acts as the Proton acceptor.

Mg(2+) is required as a cofactor.

It catalyses the reaction 2 GTP = 3',3'-c-di-GMP + 2 diphosphate. Its function is as follows. Involved in biofilm formation. Catalyzes the conversion of GTP to c-di-GMP. The polypeptide is Diguanylate cyclase (Vibrio cholerae serotype O1 (strain ATCC 39541 / Classical Ogawa 395 / O395)).